A 309-amino-acid chain; its full sequence is Protein FdhE homolog (309 aa).

Positions 1–22 (MSIRIVPQEQLEQNGKSTPEGH) are disordered.

It belongs to the FdhE family.

It is found in the cytoplasm. Its function is as follows. Necessary for formate dehydrogenase activity. The protein is Protein FdhE homolog of Pectobacterium carotovorum subsp. carotovorum (strain PC1).